The following is a 374-amino-acid chain: Putative zinc finger MYND domain-containing protein R331 (374 aa).

The Zn(2+) site is built by Cys-328, Cys-331, Cys-341, Cys-344, Cys-350, Cys-354, His-362, and Cys-366. The MYND-type zinc finger occupies Cys-328–Cys-366.

This is Putative zinc finger MYND domain-containing protein R331 from Acanthamoeba polyphaga (Amoeba).